Reading from the N-terminus, the 724-residue chain is Ribosomal RNA large subunit methyltransferase K/L (724 aa).

The THUMP domain occupies 42-153; that stretch reads DAQRLVLWSR…KGRATLSVDL (112 aa).

It belongs to the methyltransferase superfamily. RlmKL family.

It is found in the cytoplasm. It catalyses the reaction guanosine(2445) in 23S rRNA + S-adenosyl-L-methionine = N(2)-methylguanosine(2445) in 23S rRNA + S-adenosyl-L-homocysteine + H(+). The enzyme catalyses guanosine(2069) in 23S rRNA + S-adenosyl-L-methionine = N(2)-methylguanosine(2069) in 23S rRNA + S-adenosyl-L-homocysteine + H(+). In terms of biological role, specifically methylates the guanine in position 2445 (m2G2445) and the guanine in position 2069 (m7G2069) of 23S rRNA. This is Ribosomal RNA large subunit methyltransferase K/L from Xylella fastidiosa (strain M23).